A 226-amino-acid polypeptide reads, in one-letter code: Ribose-5-phosphate isomerase A (226 aa).

Substrate contacts are provided by residues 26–29 (TGST), 82–85 (DGAD), and 95–98 (KGGG). The active-site Proton acceptor is Glu-104. Substrate is bound at residue Lys-122.

Belongs to the ribose 5-phosphate isomerase family. As to quaternary structure, homodimer.

The catalysed reaction is aldehydo-D-ribose 5-phosphate = D-ribulose 5-phosphate. It functions in the pathway carbohydrate degradation; pentose phosphate pathway; D-ribose 5-phosphate from D-ribulose 5-phosphate (non-oxidative stage): step 1/1. Catalyzes the reversible conversion of ribose-5-phosphate to ribulose 5-phosphate. This is Ribose-5-phosphate isomerase A from Streptococcus uberis (strain ATCC BAA-854 / 0140J).